The following is a 168-amino-acid chain: Photosystem I assembly protein Ycf3 (168 aa).

3 TPR repeats span residues 35–68, 72–105, and 120–153; these read AFTY…EMDP, SYIL…NPFL, and GEQA…TPGN.

The protein belongs to the Ycf3 family.

Its subcellular location is the plastid. It localises to the chloroplast thylakoid membrane. Essential for the assembly of the photosystem I (PSI) complex. May act as a chaperone-like factor to guide the assembly of the PSI subunits. In Pelargonium hortorum (Common geranium), this protein is Photosystem I assembly protein Ycf3.